The chain runs to 97 residues: Large ribosomal subunit protein bL28 (97 aa).

This sequence belongs to the bacterial ribosomal protein bL28 family.

This Rickettsia felis (strain ATCC VR-1525 / URRWXCal2) (Rickettsia azadi) protein is Large ribosomal subunit protein bL28.